The following is a 235-amino-acid chain: MAATTCFFFLFPFLLLLTLSRAATFEIVNRCSYTVWAAASKGDAALDAGGRQLNSGESWTINVEPGTKGGKIWARTDCYFDDSGRGICRTGDCGGLLQCKRFGRPPTTLAEFSLNQYGKDYIDISNIKGFNVPMDFSPTTRGCRGVRCAADIVGQCPAKLKAPGGGCNDACTVFQTSEYCCTTGKCGPTEYSRFFKRLCPDAFSYVLDKPTTVTCPGSSNYRVTFCPTALELEDE.

The N-terminal stretch at 1–22 (MAATTCFFFLFPFLLLLTLSRA) is a signal peptide. 8 cysteine pairs are disulfide-bonded: Cys31-Cys226, Cys78-Cys88, Cys93-Cys99, Cys143-Cys215, Cys148-Cys199, Cys156-Cys167, Cys171-Cys180, and Cys181-Cys186. Residues 230–235 (LELEDE) constitute a propeptide, removed in mature form.

The protein belongs to the thaumatin family.

It localises to the cytoplasmic vesicle. Taste-modifying protein; intensely sweet-tasting. It is 100000 times sweeter than sucrose on a molar basis. The chain is Thaumatin II from Thaumatococcus daniellii (Katemfe).